Here is a 106-residue protein sequence, read N- to C-terminus: UPF0145 protein CTC_01500 (106 aa).

This sequence belongs to the UPF0145 family.

This chain is UPF0145 protein CTC_01500, found in Clostridium tetani (strain Massachusetts / E88).